The sequence spans 1898 residues: 1-phosphatidylinositol 4,5-bisphosphate phosphodiesterase epsilon-1 (1898 aa).

The Ras-GEF domain occupies 66–328 (FPEEVAFQLS…EREQKEKEAK (263 aa)). Disordered stretches follow at residues 419 to 444 (QPLD…GVGV) and 569 to 722 (TNTN…GPSG). Over residues 569-583 (TNTNATRPNDSSLSS) the composition is skewed to polar residues. Basic residues predominate over residues 590 to 605 (SRLKNLKNAMQKKLRG). Composition is skewed to low complexity over residues 625-637 (PPSI…SQSG), 666-687 (YTPR…GGRS), and 701-716 (SGSI…QVSG). One can recognise a PI-PLC X-box domain in the interval 910 to 1058 (EDLRYPLSHY…MKNKILIKNK (149 aa)). Active-site residues include H925 and H970. 2 disordered regions span residues 1082–1178 (QLNL…DRKT) and 1238–1274 (EEGP…STQL). Residues 1098-1123 (TVDEVEDDDLDEFLDDEENEEDDQEE) show a composition bias toward acidic residues. Residues 1124–1144 (VQVRSEKEDSPKTSKRAEKSA) show a composition bias toward basic and acidic residues. Over residues 1146 to 1155 (NIKQQDSLCS) the composition is skewed to polar residues. Low complexity-rich tracts occupy residues 1163-1172 (KPSTSKTTSK) and 1242-1253 (ASASLSFSSRAR). One can recognise a PI-PLC Y-box domain in the interval 1279–1385 (AAEFLGSVRA…CGYQLKPRCL (107 aa)). Positions 1391–1517 (LLYNKFLPLS…PLRTPTNLPI (127 aa)) constitute a C2 domain. The region spanning 1570-1665 (QIFVLRITGA…RRFVLRKKGS (96 aa)) is the Ras-associating 1 domain. Positions 1680 to 1694 (GTSGSSTSVSPSPLT) are enriched in low complexity. Positions 1680 to 1711 (GTSGSSTSVSPSPLTKDGHVKSASSNQLHGRS) are disordered. Residues 1738-1857 (DTFLVCVHNV…GRFVLENRKD (120 aa)) enclose the Ras-associating 2 domain.

As to quaternary structure, interacts (via Ras-associating domain 1) with let-60 (in GTP-bound form). Ca(2+) is required as a cofactor. As to expression, expressed in the spermatheca, vulva, intestine and excretory cells. Expressed in sensory neurons AWC, AFD, ASE, ASG and BAG, interneurons, ventral nerve cord neurons and tail neurons. Expressed in body muscles.

The catalysed reaction is a 1,2-diacyl-sn-glycero-3-phospho-(1D-myo-inositol-4,5-bisphosphate) + H2O = 1D-myo-inositol 1,4,5-trisphosphate + a 1,2-diacyl-sn-glycerol + H(+). Functionally, the production of the second messenger molecules diacylglycerol (DAG) and inositol 1,4,5-trisphosphate (IP3) is mediated by activated phosphatidylinositol-specific phospholipase C enzymes. plc-1 is a bifunctional enzyme which also regulates small GTPases of the Ras superfamily through its Ras guanine-exchange factor (RasGEF) activity. By activating IP3 receptor itr-1-mediated intracellular Ca(2+) release via the production of IP3, regulates ovulation by controlling contraction and/or dilation of the distal spermatheca valve during oocyte entry and the timing of the dilation of the spermatheca-uterine valve during oocyte exit. In a similar manner, plays an essential role in epidermal morphogenesis by regulating migration of epidermal cells during ventral closure and to a lesser extent by regulating epidermal cell dorsal intercalation. Involved in the immune response to S.aureus bacterium by activating kinase dkf-1 via the production of DAG which in turn activates transcription factor hlh-30. In ASER neurons, required for adjusting the orientation behavior in salt gradients based on the memory of previous salt concentration encountered. The polypeptide is 1-phosphatidylinositol 4,5-bisphosphate phosphodiesterase epsilon-1 (Caenorhabditis elegans).